The sequence spans 367 residues: bZIP transcription factor 18 (367 aa).

The interval 1–57 is disordered; it reads MEDPSNPQPNQSNLSQCPPLATAPTPAPVRGPYHRRAHSEVQFRLPEDLDLSEPFGG. Residues 38 to 47 are compositionally biased toward basic and acidic residues; that stretch reads HSEVQFRLPE. S70 is subject to Phosphoserine. Residues 79–124 are disordered; the sequence is SGSGSASDSAGPSAPRSDNPFSAENGGAEAGNSRPRHRHSLSVDGS. Low complexity predominate over residues 82 to 96; it reads GSASDSAGPSAPRSD. In terms of domain architecture, bZIP spans 148–211; that stretch reads DPKRAKRIIA…TGLSSENTEL (64 aa). A basic motif region spans residues 150–171; the sequence is KRAKRIIANRQSAARSKERKAR. The stretch at 166 to 245 forms a coiled coil; sequence KERKARYILE…VERLKFATGE (80 aa). The leucine-zipper stretch occupies residues 176–190; the sequence is LERKVQTLQTEATTL. Polar residues-rich tracts occupy residues 294–309, 317–328, and 354–367; these read QPNN…NPPT, ATSNAPAQSHSY, and FGRS…SSTM. 2 disordered regions span residues 294 to 330 and 343 to 367; these read QPNN…SYSE and LDIS…SSTM.

As to quaternary structure, interacts with NEAP1. Forms homodimer and heterodimer with bZIP34 and bZIP61. Ubiquitous. Strongly expressed in mature pollen.

It localises to the nucleus. Its subcellular location is the nucleoplasm. The protein localises to the cytoplasm. The protein resides in the perinuclear region. Functionally, transcription factor that may participate with bZIP34 in the gametophytic control of pollen development. This Arabidopsis thaliana (Mouse-ear cress) protein is bZIP transcription factor 18.